Consider the following 123-residue polypeptide: MATINQLVRKPRKRMVDKSDVPALQNCPQRRGVCTRVYTTTPKKPNSALRKVCRVRLTNGFEVSSYIGGEGHNLQEHSVVLIRGGRVKDLPGVRYHTVRGSLDTSGVKDRKQGRSKYGAKRPK.

The residue at position 89 (D89) is a 3-methylthioaspartic acid. The segment at 100–123 (GSLDTSGVKDRKQGRSKYGAKRPK) is disordered. The segment covering 113-123 (GRSKYGAKRPK) has biased composition (basic residues).

The protein belongs to the universal ribosomal protein uS12 family. As to quaternary structure, part of the 30S ribosomal subunit. Contacts proteins S8 and S17. May interact with IF1 in the 30S initiation complex.

Its function is as follows. With S4 and S5 plays an important role in translational accuracy. Functionally, interacts with and stabilizes bases of the 16S rRNA that are involved in tRNA selection in the A site and with the mRNA backbone. Located at the interface of the 30S and 50S subunits, it traverses the body of the 30S subunit contacting proteins on the other side and probably holding the rRNA structure together. The combined cluster of proteins S8, S12 and S17 appears to hold together the shoulder and platform of the 30S subunit. The sequence is that of Small ribosomal subunit protein uS12 from Pseudomonas aeruginosa (strain LESB58).